A 75-amino-acid polypeptide reads, in one-letter code: Putative DNA-directed RNA polymerase subunit omega (75 aa).

This sequence belongs to the RNA polymerase subunit omega family.

The protein resides in the plastid. The protein localises to the chloroplast. It carries out the reaction RNA(n) + a ribonucleoside 5'-triphosphate = RNA(n+1) + diphosphate. May be involved in RNA polymerase activity. The chain is Putative DNA-directed RNA polymerase subunit omega (rpoZ) from Mesostigma viride (Green alga).